The chain runs to 603 residues: Rab proteins geranylgeranyltransferase component A (603 aa).

Position 470 is a phosphoserine (Ser-470).

The protein belongs to the Rab GDI family.

Its function is as follows. Substrate-binding subunit (component A) of the Rab geranylgeranyltransferase (GGTase) complex. Binds unprenylated Rab proteins and presents the substrate peptide to the catalytic component B. The component A is thought to be regenerated by transferring its prenylated Rab back to the donor membrane. This Saccharomyces cerevisiae (strain ATCC 204508 / S288c) (Baker's yeast) protein is Rab proteins geranylgeranyltransferase component A (MRS6).